Here is a 208-residue protein sequence, read N- to C-terminus: MSRRYDSRTTIFSPEGRLYQVEYAMEAIGNAGSAIGILAKDGVVLVGEKKVTSKLLQTSSSMEKMYKIDDHVACAVAGIMSDANILINTARVQAQRWDRNHGFQLYMSDPSGNYGGWQAAAVGANNQAAQSILKQDYKDDATREEVVQLAIKVLSKTMDSTSLTAEKLELAELYLTPSKCVKYHVHSPDSLTKLLVKHGVTQPAAETS.

It belongs to the peptidase T1A family. In terms of assembly, component of the 20S core complex of the 26S proteasome. The 26S proteasome is composed of a core protease (CP), known as the 20S proteasome, capped at one or both ends by the 19S regulatory particle (RP/PA700). The 20S proteasome core is composed of 28 subunits that are arranged in four stacked rings, resulting in a barrel-shaped structure. The two end rings are each formed by seven alpha subunits, and the two central rings are each formed by seven beta subunits. The catalytic chamber with the active sites is on the inside of the barrel.

The protein localises to the cytoplasm. It is found in the nucleus. Its function is as follows. The proteasome is a multicatalytic proteinase complex which is characterized by its ability to cleave peptides with Arg, Phe, Tyr, Leu, and Glu adjacent to the leaving group at neutral or slightly basic pH. The proteasome has an ATP-dependent proteolytic activity. This Arabidopsis thaliana (Mouse-ear cress) protein is Putative proteasome subunit alpha type-4-B (PAC2).